Here is a 582-residue protein sequence, read N- to C-terminus: Inositol transporter 4 (582 aa).

Transmembrane regions (helical) follow at residues 35–55 (GIGG…LLFI), 70–90 (STIV…GGWI), 105–125 (VLFL…VIIV), 128–148 (IFVG…ISEA), 162–182 (GLLI…FVHT), 188–208 (WMLG…LSLP), 290–310 (FVGI…AGYA), 317–337 (ALSL…MMFV), 345–365 (LMII…TVFS), 456–476 (FGFL…PGMG), 494–514 (LGGG…SESF), and 525–545 (GTFL…WLLV).

It belongs to the major facilitator superfamily. Sugar transporter (TC 2.A.1.1) family. In terms of tissue distribution, highly expressed in pollen and phloem companion cells.

It is found in the cell membrane. Plasma membrane inositol-proton symporter. Mediates high-affinity myoinositol-proton symport across the plasma membrane. Active with myoinositol, scylloinositol and D-chiroinositol. Low activity with mucoinositol and alloinositol. The sequence is that of Inositol transporter 4 (INT4) from Arabidopsis thaliana (Mouse-ear cress).